We begin with the raw amino-acid sequence, 200 residues long: Elongation factor Ts (200 aa).

The segment at 81–84 (TDFV) is involved in Mg(2+) ion dislocation from EF-Tu.

This sequence belongs to the EF-Ts family.

The protein localises to the cytoplasm. Associates with the EF-Tu.GDP complex and induces the exchange of GDP to GTP. It remains bound to the aminoacyl-tRNA.EF-Tu.GTP complex up to the GTP hydrolysis stage on the ribosome. This chain is Elongation factor Ts, found in Nitratidesulfovibrio vulgaris (strain DSM 19637 / Miyazaki F) (Desulfovibrio vulgaris).